Consider the following 115-residue polypeptide: Large ribosomal subunit protein bL20c (115 aa).

This sequence belongs to the bacterial ribosomal protein bL20 family.

Its subcellular location is the plastid. The protein localises to the chloroplast. In terms of biological role, binds directly to 23S ribosomal RNA and is necessary for the in vitro assembly process of the 50S ribosomal subunit. It is not involved in the protein synthesizing functions of that subunit. The polypeptide is Large ribosomal subunit protein bL20c (Nymphaea alba (White water-lily)).